We begin with the raw amino-acid sequence, 82 residues long: Translational regulator CsrA (82 aa).

Belongs to the CsrA/RsmA family. As to quaternary structure, homodimer; the beta-strands of each monomer intercalate to form a hydrophobic core, while the alpha-helices form wings that extend away from the core.

The protein resides in the cytoplasm. A translational regulator that binds mRNA to regulate translation initiation and/or mRNA stability. Usually binds in the 5'-UTR at or near the Shine-Dalgarno sequence preventing ribosome-binding, thus repressing translation. Its main target seems to be the major flagellin gene, while its function is anatagonized by FliW. The protein is Translational regulator CsrA of Brachyspira hyodysenteriae (strain ATCC 49526 / WA1).